Reading from the N-terminus, the 417-residue chain is Putative Bro-N domain-containing protein 289L (417 aa).

One can recognise a Bro-N domain in the interval 4–134 (LINLKDCKEY…VILPSIRKFG (131 aa)). The stretch at 152 to 193 (KDKSEQELQFQLKQEREEKENAYIKLRSETKRLKQQIKRTLE) forms a coiled coil.

It belongs to the IIV-6 201R/289L family.

This is Putative Bro-N domain-containing protein 289L from Invertebrate iridescent virus 6 (IIV-6).